The sequence spans 101 residues: Large ribosomal subunit protein uL24 (101 aa).

Belongs to the universal ribosomal protein uL24 family. As to quaternary structure, part of the 50S ribosomal subunit.

Its function is as follows. One of two assembly initiator proteins, it binds directly to the 5'-end of the 23S rRNA, where it nucleates assembly of the 50S subunit. One of the proteins that surrounds the polypeptide exit tunnel on the outside of the subunit. The protein is Large ribosomal subunit protein uL24 of Streptococcus gordonii (strain Challis / ATCC 35105 / BCRC 15272 / CH1 / DL1 / V288).